We begin with the raw amino-acid sequence, 165 residues long: MKSIYITGYMGAGKTTIGKVLSKELHMDVVDTDQKIEEKQEKAIRDIFAEEGEMAFREYESEMVRSLPVQNVIITTGGGIIERAENRKWMKENGTVVYLYCDPHVIAERLREDTTRPLFQKKDIDAFITKFESRRAYYEEADIHIDTTNKSVKQIMNELKQKINE.

Position 11 to 16 (11 to 16 (GAGKTT)) interacts with ATP. Thr-15 is a Mg(2+) binding site. Substrate is bound by residues Asp-33, Arg-57, and Gly-78. Residue Arg-116 coordinates ATP. Residue Arg-134 coordinates substrate.

The protein belongs to the shikimate kinase family. Monomer. It depends on Mg(2+) as a cofactor.

Its subcellular location is the cytoplasm. It catalyses the reaction shikimate + ATP = 3-phosphoshikimate + ADP + H(+). Its pathway is metabolic intermediate biosynthesis; chorismate biosynthesis; chorismate from D-erythrose 4-phosphate and phosphoenolpyruvate: step 5/7. Functionally, catalyzes the specific phosphorylation of the 3-hydroxyl group of shikimic acid using ATP as a cosubstrate. The polypeptide is Shikimate kinase (Bacillus mycoides (strain KBAB4) (Bacillus weihenstephanensis)).